Here is a 723-residue protein sequence, read N- to C-terminus: Polyribonucleotide nucleotidyltransferase (723 aa).

2 residues coordinate Mg(2+): aspartate 488 and aspartate 494. A KH domain is found at 555-614 (PKIITLNIKPEKIKDVIGPGGKQINAIIDETGVKIDIEQDGTVYIASQDQAMNRKAIAII). Positions 624–692 (GEVYTGKVRR…QQGRVNLSRK (69 aa)) constitute an S1 motif domain. The disordered stretch occupies residues 692-723 (KALLEKKEQPEGDKKPQAEKKFYPKTKKPESK). Positions 693-723 (ALLEKKEQPEGDKKPQAEKKFYPKTKKPESK) are enriched in basic and acidic residues.

It belongs to the polyribonucleotide nucleotidyltransferase family. Mg(2+) serves as cofactor.

It localises to the cytoplasm. It catalyses the reaction RNA(n+1) + phosphate = RNA(n) + a ribonucleoside 5'-diphosphate. In terms of biological role, involved in mRNA degradation. Catalyzes the phosphorolysis of single-stranded polyribonucleotides processively in the 3'- to 5'-direction. The sequence is that of Polyribonucleotide nucleotidyltransferase from Listeria monocytogenes serovar 1/2a (strain ATCC BAA-679 / EGD-e).